Here is a 463-residue protein sequence, read N- to C-terminus: MGPKYVFITAIIGVFWHVQGFPNPGIKQDKAVHNRELSEERPLEEQIAEADTVSRGTSKENQEMLKNDSFADELGLLMSVAEKEGDVKRSGSVRSSVGGHRGTLDDADSTKNLKPAEYFDSTKSMLDYKYEDDPDGLHQLDGTPLTAEDIVRKIATRIYEENDRGVFDKIVSKLLNLGLITESQAYTLEDEVAEVLQQLIANEAKNREKEAGDLDYAAVRSDVYDDDKQEGKMETRNKNEDRESSETKNEDSFSSKERRNELSPEEDFDDLQYFPNFNRLIKSLNSENDAKEKKTLITIMKTLIDFVKMMVKYGTITPEEGVNYLENLDAMIAVQAKNKLGKSFGSHKSILSEDKNVDESDSTKQEAAKMEKEYEALKDSTKPEPKDAEDKDKPKGKAETYLEAIRKNIEWLKEHNKEGNKGVSDNDLSKLKDFINQQADSYVEKGILDKEEANVIKRIYSSL.

A signal peptide spans 1–20 (MGPKYVFITAIIGVFWHVQG). 3 disordered regions span residues 87 to 111 (VKRS…DSTK), 225 to 267 (DDDK…PEED), and 353 to 398 (EDKN…KGKA). 2 stretches are compositionally biased toward basic and acidic residues: residues 102 to 111 (GTLDDADSTK) and 229 to 262 (QEGK…RNEL).

Interacts with CHGA. Interacts with secretogranin II/SCG2. Interacts (via C-terminus) with CPE.

Its subcellular location is the cytoplasmic vesicle. It is found in the secretory vesicle. The protein localises to the secretory vesicle membrane. The protein resides in the secreted. Member of the granin protein family that regulates the biogenesis of secretory granules. Acts as a sorting receptor for intragranular proteins including chromogranin A/CHGA. May also play a role in angiogenesis. Promotes endothelial proliferation, migration and tube formation through MEK/ERK signaling pathway. In Xenopus tropicalis (Western clawed frog), this protein is Secretogranin-3 (scg3).